The chain runs to 123 residues: Small ribosomal subunit protein uS12cz/uS12cy (123 aa).

Belongs to the universal ribosomal protein uS12 family. In terms of assembly, part of the 30S ribosomal subunit.

It localises to the plastid. It is found in the chloroplast. Its function is as follows. With S4 and S5 plays an important role in translational accuracy. Located at the interface of the 30S and 50S subunits. The chain is Small ribosomal subunit protein uS12cz/uS12cy (rps12-A) from Citrus sinensis (Sweet orange).